We begin with the raw amino-acid sequence, 108 residues long: uncharacterized protein (108 aa).

This is an uncharacterized protein from Enterobacteria phage T4 (Bacteriophage T4).